The sequence spans 66 residues: Ornithorhynchus venom defensin-like peptide A (66 aa).

The first 22 residues, methionine 1–alanine 22, serve as a signal peptide directing secretion. Positions glutamate 23–proline 24 are excised as a propeptide. Intrachain disulfides connect cysteine 33–cysteine 63, cysteine 40–cysteine 56, and cysteine 48–cysteine 64.

Produced by the crural gland and detected in venom from the spur located on each male hind leg. Is the only OvDLP that is expressed in venom gland alone.

The protein localises to the secreted. In terms of biological role, does not show antimicrobial, myotoxic, hemolytic and cell-promoting activities. This Ornithorhynchus anatinus (Duckbill platypus) protein is Ornithorhynchus venom defensin-like peptide A.